Reading from the N-terminus, the 281-residue chain is Energy-coupling factor transporter ATP-binding protein EcfA1 (281 aa).

An ABC transporter domain is found at 6–245; it reads IKSEDLVFKY…VEKIKSIGLD (240 aa). 44-51 is a binding site for ATP; the sequence is GHNGSGKS.

Belongs to the ABC transporter superfamily. Energy-coupling factor EcfA family. Forms a stable energy-coupling factor (ECF) transporter complex composed of 2 membrane-embedded substrate-binding proteins (S component), 2 ATP-binding proteins (A component) and 2 transmembrane proteins (T component).

It localises to the cell membrane. In terms of biological role, ATP-binding (A) component of a common energy-coupling factor (ECF) ABC-transporter complex. Unlike classic ABC transporters this ECF transporter provides the energy necessary to transport a number of different substrates. The protein is Energy-coupling factor transporter ATP-binding protein EcfA1 of Clostridium perfringens (strain ATCC 13124 / DSM 756 / JCM 1290 / NCIMB 6125 / NCTC 8237 / Type A).